The primary structure comprises 436 residues: Histidine--tRNA ligase 1 (436 aa).

Belongs to the class-II aminoacyl-tRNA synthetase family. As to quaternary structure, homodimer.

The protein localises to the cytoplasm. The catalysed reaction is tRNA(His) + L-histidine + ATP = L-histidyl-tRNA(His) + AMP + diphosphate + H(+). This is Histidine--tRNA ligase 1 from Bacillus cereus (strain ATCC 10987 / NRS 248).